The sequence spans 354 residues: Isopentenyl-diphosphate delta-isomerase (354 aa).

11–12 contacts substrate; it reads KK. Residues S67, 68–70, S98, and N126 contribute to the FMN site; that span reads SMT. Substrate is bound at residue 98–100; the sequence is SFK. Q160 serves as a coordination point for substrate. Position 161 (E161) interacts with Mg(2+). FMN-binding positions include K192, T222, and 289 to 290; that span reads AA.

It belongs to the IPP isomerase type 2 family. In terms of assembly, homooctamer. Dimer of tetramers. The cofactor is FMN. It depends on NADPH as a cofactor. Mg(2+) serves as cofactor.

It is found in the cytoplasm. The enzyme catalyses isopentenyl diphosphate = dimethylallyl diphosphate. Functionally, involved in the biosynthesis of isoprenoids. Catalyzes the 1,3-allylic rearrangement of the homoallylic substrate isopentenyl (IPP) to its allylic isomer, dimethylallyl diphosphate (DMAPP). This Borrelia garinii subsp. bavariensis (strain ATCC BAA-2496 / DSM 23469 / PBi) (Borreliella bavariensis) protein is Isopentenyl-diphosphate delta-isomerase.